The following is a 362-amino-acid chain: Heat-inducible transcription repressor HrcA (362 aa).

It belongs to the HrcA family.

Negative regulator of class I heat shock genes (grpE-dnaK-dnaJ and groELS operons). Prevents heat-shock induction of these operons. In Rhodopseudomonas palustris (strain BisB18), this protein is Heat-inducible transcription repressor HrcA.